The following is a 139-amino-acid chain: Large ribosomal subunit protein uL16 (139 aa).

The protein belongs to the universal ribosomal protein uL16 family. In terms of assembly, part of the 50S ribosomal subunit.

Binds 23S rRNA and is also seen to make contacts with the A and possibly P site tRNAs. The protein is Large ribosomal subunit protein uL16 of Synechocystis sp. (strain ATCC 27184 / PCC 6803 / Kazusa).